We begin with the raw amino-acid sequence, 278 residues long: Endoplasmic reticulum junction formation protein lunapark (278 aa).

Over 1-45 the chain is Cytoplasmic; that stretch reads MFSALGKWVRGSRNDKDFVTKYTADLSQITSQIHQLDVALKKSQS. Residues 46-66 traverse the membrane as a helical segment; sequence ILSQWQSNLTFYGIALTVLAL. Residues 67-77 are Lumenal-facing; the sequence is SYTYWEYHGYR. A helical membrane pass occupies residues 78–98; it reads PYLVVTALLCIGSLILFKWAL. Residues 99-278 are Cytoplasmic-facing; sequence TKLYAFYNNN…PSQSEKEKTK (180 aa). The stretch at 107–183 forms a coiled coil; it reads NNRLRKLAKL…ELEKFKKESH (77 aa). A C4-type; plays a role in ER morphology zinc finger spans residues 223-247; the sequence is CPQCHWKSNCYRLASKPIIFICPHC. The interval 258–278 is disordered; the sequence is EDAIEAKQPAQPSQSEKEKTK.

It belongs to the lunapark family. As to quaternary structure, interacts with RTN1; this interaction is negatively regulated by SEY1. Interacts with SEY1 and YOP1.

It localises to the endoplasmic reticulum membrane. Its function is as follows. Plays a role in tubular endoplasmic reticulum network formation and maintenance. Works in conjunction with the ER shaping proteins (reticulons RTN1 and RTN2, YOP1), and in antagonism to SEY1 to maintain the network in a dynamic equilibrium. May counterbalance SEY1-directed polygon formation by promoting polygon loss through ring closure. The chain is Endoplasmic reticulum junction formation protein lunapark (LNP1) from Saccharomyces cerevisiae (strain ATCC 204508 / S288c) (Baker's yeast).